The chain runs to 348 residues: MKIIIDDKIPYIKEAAEKIADEAIYAPGKDFTRELVQDADALIIRTRTHCNRELLEGSKVKFIATATIGFDHIDTEYCKQAGIEWANAPGCNSASVAQYIQSSLLIWKSLRNKKPDELTIGIIGVGNVGSKVAKVAQDFGMRVLLNDLPREEKEGNITFTSLEKIAEECDIITFHVPLYKEGKYKTYHLADGNFFRSLQRKPVVINTSRGEVIETNALLEAINNGIISDAVIDVWEHEPEINRELLEKVLIGTPHIAGYSADGKANATRMSLDSICRFFHLSATYEITPPAPSSPLIEAKDREEALLKMYNPIEDSNRLKSHPELFETLRGDYPLRREEKAYNIIGIK.

Residues Thr-46 and Thr-67 each contribute to the substrate site. Asp-147 contacts NAD(+). The active site involves Arg-209. Asp-233 contacts NAD(+). The active site involves Glu-238. The active-site Proton donor is His-255. Residue Gly-258 participates in NAD(+) binding. Residue Tyr-259 coordinates substrate.

This sequence belongs to the D-isomer specific 2-hydroxyacid dehydrogenase family. PdxB subfamily. Homodimer.

Its subcellular location is the cytoplasm. The catalysed reaction is 4-phospho-D-erythronate + NAD(+) = (R)-3-hydroxy-2-oxo-4-phosphooxybutanoate + NADH + H(+). It participates in cofactor biosynthesis; pyridoxine 5'-phosphate biosynthesis; pyridoxine 5'-phosphate from D-erythrose 4-phosphate: step 2/5. In terms of biological role, catalyzes the oxidation of erythronate-4-phosphate to 3-hydroxy-2-oxo-4-phosphonooxybutanoate. This Bacteroides thetaiotaomicron (strain ATCC 29148 / DSM 2079 / JCM 5827 / CCUG 10774 / NCTC 10582 / VPI-5482 / E50) protein is Erythronate-4-phosphate dehydrogenase.